Consider the following 428-residue polypeptide: Glutamate-1-semialdehyde 2,1-aminomutase (428 aa).

K265 carries the N6-(pyridoxal phosphate)lysine modification.

Belongs to the class-III pyridoxal-phosphate-dependent aminotransferase family. HemL subfamily. In terms of assembly, homodimer. Pyridoxal 5'-phosphate serves as cofactor.

It localises to the cytoplasm. The catalysed reaction is (S)-4-amino-5-oxopentanoate = 5-aminolevulinate. It participates in porphyrin-containing compound metabolism; protoporphyrin-IX biosynthesis; 5-aminolevulinate from L-glutamyl-tRNA(Glu): step 2/2. In Legionella pneumophila (strain Paris), this protein is Glutamate-1-semialdehyde 2,1-aminomutase.